The primary structure comprises 667 residues: Beta-galactosidase LacZ (667 aa).

Residue Arg109 coordinates substrate. A Zn(2+)-binding site is contributed by Cys113. A substrate-binding site is contributed by Asn147. Glu148 functions as the Proton donor in the catalytic mechanism. Cys153, Cys155, and Cys158 together coordinate Zn(2+). Glu307 acts as the Nucleophile in catalysis. Residues Trp315 and 355–358 (EKFH) contribute to the substrate site.

It belongs to the glycosyl hydrolase 42 family.

It carries out the reaction Hydrolysis of terminal non-reducing beta-D-galactose residues in beta-D-galactosides.. Catalyzes the hydrolysis of lactose to its constituent monosaccharides glucose and galactose. This Lactobacillus acidophilus (strain ATCC 700396 / NCK56 / N2 / NCFM) protein is Beta-galactosidase LacZ.